The primary structure comprises 245 residues: DNA repair protein RecO (245 aa).

The protein belongs to the RecO family.

Its function is as follows. Involved in DNA repair and RecF pathway recombination. This Klebsiella pneumoniae (strain 342) protein is DNA repair protein RecO.